The chain runs to 484 residues: L-amino-acid oxidase (484 aa).

A disulfide bond links Cys-8 and Cys-171. Residues 41–42 (MS), 61–62 (EA), and Arg-69 each bind FAD. His-73 lines the Zn(2+) pocket. 85-88 (GPMR) contributes to the FAD binding site. Position 88 (Arg-88) interacts with substrate. Asn-170 carries an N-linked (GlcNAc...) asparagine glycan. His-221 serves as a coordination point for substrate. Residue Val-259 participates in FAD binding. Glu-277 lines the Zn(2+) pocket. A disulfide bridge links Cys-329 with Cys-410. Tyr-370 contributes to the substrate binding site. Residues Glu-455 and 462-467 (GWIDST) each bind FAD. Position 462–463 (462–463 (GW)) interacts with substrate.

This sequence belongs to the flavin monoamine oxidase family. FIG1 subfamily. Homodimer; non-covalently linked. FAD is required as a cofactor. In terms of tissue distribution, expressed by the venom gland.

The protein resides in the secreted. The catalysed reaction is an L-alpha-amino acid + O2 + H2O = a 2-oxocarboxylate + H2O2 + NH4(+). In terms of biological role, catalyzes an oxidative deamination of predominantly hydrophobic and aromatic L-amino acids, thus producing hydrogen peroxide that may contribute to the diverse toxic effects of this enzyme. Exhibits diverse biological activities, such as hemorrhage, hemolysis, edema, apoptosis of vascular endothelial cells or tumor cell lines, antibacterial and antiparasitic activities, as well as regulation of platelet aggregation. Effects of snake L-amino oxidases on platelets are controversial, since they either induce aggregation or inhibit agonist-induced aggregation. These different effects are probably due to different experimental conditions. The protein is L-amino-acid oxidase of Vipera ammodytes ammodytes (Western sand viper).